The sequence spans 84 residues: uncharacterized protein (84 aa).

The protein belongs to the chlamydial CPn_0710/CT_666/TC_0037 family.

This is an uncharacterized protein from Chlamydia pneumoniae (Chlamydophila pneumoniae).